The following is a 1186-amino-acid chain: Trafficking protein particle complex II-specific subunit 120 homolog (1186 aa).

Disordered stretches follow at residues 777-824 (PTDS…EKES) and 964-984 (TKDP…SEKN). Residues 779-792 (DSDNTMSSGRNAAG) show a composition bias toward polar residues. At serine 971 the chain carries Phosphoserine. The segment covering 972-981 (PSSSRNPSFS) has biased composition (low complexity).

The protein belongs to the TRS120 family. Part of the multisubunit TRAPP (transport protein particle) II complex composed of BET3, BET5, TRS20, TRS23, TRS31, TRS33, TRS65, TRS85, TRS120 and TRS130. Expressed in roots, leaves, stems and flowers.

It localises to the golgi apparatus. The protein resides in the trans-Golgi network. Its subcellular location is the early endosome. Its function is as follows. Specific subunit of the TRAPP II complex, a highly conserved vesicle tethering complex that is required for the proper transport of proteins in post-Golgi trafficking pathways to the growing cell plate in mitotic active cells. Required for the polarized and selective transport of PIN2 and probably PIN1 to the plasma membrane. Not required for ER-to-Golgi as well as biosynthetic and endocytic vacuolar transport. The protein is Trafficking protein particle complex II-specific subunit 120 homolog of Arabidopsis thaliana (Mouse-ear cress).